The following is a 397-amino-acid chain: Arginine biosynthesis bifunctional protein ArgJ (397 aa).

Positions 147, 173, 184, 270, 392, and 397 each coordinate substrate. Threonine 184 acts as the Nucleophile in catalysis.

It belongs to the ArgJ family. In terms of assembly, heterotetramer of two alpha and two beta chains.

Its subcellular location is the cytoplasm. It catalyses the reaction N(2)-acetyl-L-ornithine + L-glutamate = N-acetyl-L-glutamate + L-ornithine. The enzyme catalyses L-glutamate + acetyl-CoA = N-acetyl-L-glutamate + CoA + H(+). The protein operates within amino-acid biosynthesis; L-arginine biosynthesis; L-ornithine and N-acetyl-L-glutamate from L-glutamate and N(2)-acetyl-L-ornithine (cyclic): step 1/1. Its pathway is amino-acid biosynthesis; L-arginine biosynthesis; N(2)-acetyl-L-ornithine from L-glutamate: step 1/4. Functionally, catalyzes two activities which are involved in the cyclic version of arginine biosynthesis: the synthesis of N-acetylglutamate from glutamate and acetyl-CoA as the acetyl donor, and of ornithine by transacetylation between N(2)-acetylornithine and glutamate. The polypeptide is Arginine biosynthesis bifunctional protein ArgJ (Streptococcus thermophilus (strain CNRZ 1066)).